The following is a 118-amino-acid chain: Large ribosomal subunit protein bL20 (118 aa).

It belongs to the bacterial ribosomal protein bL20 family.

In terms of biological role, binds directly to 23S ribosomal RNA and is necessary for the in vitro assembly process of the 50S ribosomal subunit. It is not involved in the protein synthesizing functions of that subunit. The sequence is that of Large ribosomal subunit protein bL20 from Campylobacter concisus (strain 13826).